A 113-amino-acid chain; its full sequence is Hydrogenase maturation factor HypA (113 aa).

Ni(2+) is bound at residue H2. Residues C73, C76, C89, and C92 each contribute to the Zn(2+) site.

The protein belongs to the HypA/HybF family.

In terms of biological role, involved in the maturation of [NiFe] hydrogenases. Required for nickel insertion into the metal center of the hydrogenase. The protein is Hydrogenase maturation factor HypA of Cereibacter sphaeroides (Rhodobacter sphaeroides).